We begin with the raw amino-acid sequence, 762 residues long: Centrosomal protein of 85 kDa (762 aa).

2 disordered regions span residues 1–26 and 94–119; these read MAMQ…IQKG and VMPS…SKLP. 2 stretches are compositionally biased toward polar residues: residues 14–26 and 98–111; these read HVTS…IQKG and TLGT…STPV. S17 bears the Phosphoserine mark. Phosphoserine is present on residues S126 and S141. Residues 257 to 433 are mediates interaction with NEK2 and is required for its function in the suppression of centrosome disjunction; that stretch reads GLSKPLPSQV…QLIRESLKVA (177 aa). Coiled-coil stretches lie at residues 334–657 and 723–750; these read EHLL…RQAQ and PDVI…MSDR. Positions 434 to 476 are required for centrosome localization and for its function in the suppression of centrosome disjunction; that stretch reads LQKHSEEVKKQEERVKGRDKHINNLKKKCQKESEQNREKQQRI. Basic and acidic residues-rich tracts occupy residues 443–455 and 463–474; these read KQEE…DKHI and QKESEQNREKQQ. Disordered regions lie at residues 443-474 and 541-570; these read KQEE…EKQQ and EAEF…VEME. S623 carries the phosphoserine modification.

It belongs to the CEP85 family. As to quaternary structure, homodimer. Interacts with STIL (via N-terminus); this interaction is essential for robust PLK4 activation and efficient centriole assembly and for PLK4-dependent cell migration. Interacts with PLK4; required for CEP85 to be able to drive centriole duplication and cell migration.

The protein resides in the cytoplasm. It localises to the cytoskeleton. Its subcellular location is the microtubule organizing center. The protein localises to the centrosome. It is found in the spindle pole. The protein resides in the nucleus. It localises to the nucleolus. Its subcellular location is the centriole. The protein localises to the cell cortex. Acts as a regulator of centriole duplication through a direct interaction with STIL, a key factor involved in the early steps of centriole formation. The CEP85-STIL protein complex acts as a modulator of PLK4-driven cytoskeletal rearrangements and directional cell motility. Acts as a negative regulator of NEK2 to maintain the centrosome integrity in interphase. Suppresses centrosome disjunction by inhibiting NEK2 kinase activity. This chain is Centrosomal protein of 85 kDa, found in Homo sapiens (Human).